Reading from the N-terminus, the 453-residue chain is Bifunctional protein GlmU (453 aa).

The segment at 1–225 (MNIVILAAGT…DWETLGVNSK (225 aa)) is pyrophosphorylase. UDP-N-acetyl-alpha-D-glucosamine-binding positions include 6–9 (LAAG), K20, Q71, 76–77 (GT), 98–100 (YGD), G135, E150, N165, and N223. D100 is a binding site for Mg(2+). N223 is a Mg(2+) binding site. The tract at residues 226 to 246 (AQLAELERIHQRNVADALLVE) is linker. Residues 247–453 (GVTLADPARV…GYVRPVKKKS (207 aa)) form an N-acetyltransferase region. UDP-N-acetyl-alpha-D-glucosamine is bound by residues R329 and K347. Catalysis depends on H359, which acts as the Proton acceptor. UDP-N-acetyl-alpha-D-glucosamine is bound by residues Y362 and N373. Acetyl-CoA is bound by residues A376, 382–383 (NY), S401, and A419.

In the N-terminal section; belongs to the N-acetylglucosamine-1-phosphate uridyltransferase family. This sequence in the C-terminal section; belongs to the transferase hexapeptide repeat family. Homotrimer. Requires Mg(2+) as cofactor.

The protein localises to the cytoplasm. The enzyme catalyses alpha-D-glucosamine 1-phosphate + acetyl-CoA = N-acetyl-alpha-D-glucosamine 1-phosphate + CoA + H(+). It carries out the reaction N-acetyl-alpha-D-glucosamine 1-phosphate + UTP + H(+) = UDP-N-acetyl-alpha-D-glucosamine + diphosphate. It functions in the pathway nucleotide-sugar biosynthesis; UDP-N-acetyl-alpha-D-glucosamine biosynthesis; N-acetyl-alpha-D-glucosamine 1-phosphate from alpha-D-glucosamine 6-phosphate (route II): step 2/2. Its pathway is nucleotide-sugar biosynthesis; UDP-N-acetyl-alpha-D-glucosamine biosynthesis; UDP-N-acetyl-alpha-D-glucosamine from N-acetyl-alpha-D-glucosamine 1-phosphate: step 1/1. It participates in bacterial outer membrane biogenesis; LPS lipid A biosynthesis. Functionally, catalyzes the last two sequential reactions in the de novo biosynthetic pathway for UDP-N-acetylglucosamine (UDP-GlcNAc). The C-terminal domain catalyzes the transfer of acetyl group from acetyl coenzyme A to glucosamine-1-phosphate (GlcN-1-P) to produce N-acetylglucosamine-1-phosphate (GlcNAc-1-P), which is converted into UDP-GlcNAc by the transfer of uridine 5-monophosphate (from uridine 5-triphosphate), a reaction catalyzed by the N-terminal domain. The sequence is that of Bifunctional protein GlmU from Burkholderia vietnamiensis (strain G4 / LMG 22486) (Burkholderia cepacia (strain R1808)).